Consider the following 249-residue polypeptide: Small ribosomal subunit protein eS6 (249 aa).

The segment covering 223 to 238 (LRQRDHSKKHTQKVHA) has biased composition (basic residues). A disordered region spans residues 223–249 (LRQRDHSKKHTQKVHAQRAEVAAFQKK).

It belongs to the eukaryotic ribosomal protein eS6 family. As to quaternary structure, component of the small ribosomal subunit. Part of the small subunit (SSU) processome, composed of more than 70 proteins and the RNA chaperone small nucleolar RNA (snoRNA) U3. Post-translationally, ribosomal protein S6 is the major substrate of protein kinases in eukaryote ribosomes.

Its subcellular location is the cytoplasm. The protein localises to the nucleus. It is found in the nucleolus. Functionally, component of the 40S small ribosomal subunit. Plays an important role in controlling cell growth and proliferation through the selective translation of particular classes of mRNA. Part of the small subunit (SSU) processome, first precursor of the small eukaryotic ribosomal subunit. During the assembly of the SSU processome in the nucleolus, many ribosome biogenesis factors, an RNA chaperone and ribosomal proteins associate with the nascent pre-rRNA and work in concert to generate RNA folding, modifications, rearrangements and cleavage as well as targeted degradation of pre-ribosomal RNA by the RNA exosome. The protein is Small ribosomal subunit protein eS6 (RPS6) of Leishmania infantum.